Consider the following 139-residue polypeptide: Cystatin-11 (139 aa).

The first 28 residues, 1–28 (MMARLWKTTWFLLAILVALVAFSYQVKR), serve as a signal peptide directing secretion. 2 cysteine pairs are disulfide-bonded: cysteine 94/cysteine 102 and cysteine 115/cysteine 135. An N-linked (GlcNAc...) asparagine glycan is attached at asparagine 134.

This sequence belongs to the cystatin family.

It localises to the secreted. Its function is as follows. Has antibacterial activity against the Gram-negative bacteria E.coli. May play a role in sperm maturation and fertilization. In Rattus norvegicus (Rat), this protein is Cystatin-11 (Cst11).